Here is a 167-residue protein sequence, read N- to C-terminus: I-Kappa-B like protein F2 (167 aa).

3 ANK repeats span residues 54 to 86 (HGKQCVHIVSNPGIADPQEKLKLLMEWGADING), 91 to 121 (FGNTPLHIAAYTQNHKLATWLCNQPGINMGI), and 125 to 154 (LFKTPYYVACERHDLKIMNILRAKGTRCGV).

The protein belongs to the polydnaviridae I-Kappa-B-like protein family.

Suppresses the host immune response through NF-kappa-B inactivation. Possesses ankyrin repeat domains required for NF-kappa-B binding but lacks the regulatory regions required for dissociation from NF-kappa-B and degradation. Therefore, prevents host NF-kappa-B release and subsequent activation. This chain is I-Kappa-B like protein F2 (F3), found in Microplitis demolitor bracovirus (isolate Webb) (MdBV).